A 209-amino-acid polypeptide reads, in one-letter code: ATP phosphoribosyltransferase (209 aa).

It belongs to the ATP phosphoribosyltransferase family. Short subfamily. Heteromultimer composed of HisG and HisZ subunits.

It localises to the cytoplasm. The catalysed reaction is 1-(5-phospho-beta-D-ribosyl)-ATP + diphosphate = 5-phospho-alpha-D-ribose 1-diphosphate + ATP. It functions in the pathway amino-acid biosynthesis; L-histidine biosynthesis; L-histidine from 5-phospho-alpha-D-ribose 1-diphosphate: step 1/9. Its function is as follows. Catalyzes the condensation of ATP and 5-phosphoribose 1-diphosphate to form N'-(5'-phosphoribosyl)-ATP (PR-ATP). Has a crucial role in the pathway because the rate of histidine biosynthesis seems to be controlled primarily by regulation of HisG enzymatic activity. The protein is ATP phosphoribosyltransferase of Alkaliphilus metalliredigens (strain QYMF).